The chain runs to 385 residues: DNA replication and repair protein RecF (385 aa).

Position 30–37 (glycine 30–threonine 37) interacts with ATP.

Belongs to the RecF family.

Its subcellular location is the cytoplasm. Its function is as follows. The RecF protein is involved in DNA metabolism; it is required for DNA replication and normal SOS inducibility. RecF binds preferentially to single-stranded, linear DNA. It also seems to bind ATP. This chain is DNA replication and repair protein RecF, found in Mycobacterium marinum (strain ATCC BAA-535 / M).